The sequence spans 225 residues: Vacuolar protein sorting-associated protein 2 homolog 1 (225 aa).

Residues 13-54 (AELLRENKRMLDKSIREIERERQGLQTQEKKLINEIKKTAKQ) adopt a coiled-coil conformation.

Belongs to the SNF7 family. Component of the endosomal sorting required for transport complex III (ESCRT-III), composed at least of VPS2, VPS20, VPS24 and VPS32. Interacts with SKD1.

The protein localises to the endosome. Functionally, component of the ESCRT-III complex, which is required for multivesicular bodies (MVBs) formation and sorting of endosomal cargo proteins into MVBs. The ESCRT-III complex is probably involved in the concentration of MVB cargo. The polypeptide is Vacuolar protein sorting-associated protein 2 homolog 1 (VPS2.1) (Arabidopsis thaliana (Mouse-ear cress)).